The following is a 318-amino-acid chain: MSVVVYAPASIGNVSVGFDVLGAAVSPIDGTLLGDRVLVELGSEAFTLATAGSFVDKLPENPKDNIVYDCWCVFSRELNKKNVALKNVHMILEKNMPIGSGLGSSACSIVAALDALNQFHDNPLNDMELLALMGEMEGQISGGIHYDNVAPCYLGGLQLMVEELGIISQEVPCFDEWYWVMAYPGIKVSTAEAREILPSQYRRQDVIAHGRNLAGFIHACYSKQPELAAKMIKDVVAEPYRERLLPNFAKAREYAASAGALTTGISGSGPTLFSICKDKDVADRVSRWLQENYVQNNEGFVHVCRLDKQGSQVTGSKL.

Residue 97 to 107 (PIGSGLGSSAC) participates in ATP binding.

Belongs to the GHMP kinase family. Homoserine kinase subfamily.

It localises to the cytoplasm. It catalyses the reaction L-homoserine + ATP = O-phospho-L-homoserine + ADP + H(+). Its pathway is amino-acid biosynthesis; L-threonine biosynthesis; L-threonine from L-aspartate: step 4/5. Catalyzes the ATP-dependent phosphorylation of L-homoserine to L-homoserine phosphate. The polypeptide is Homoserine kinase (Aliivibrio fischeri (strain ATCC 700601 / ES114) (Vibrio fischeri)).